The following is a 692-amino-acid chain: Elongation factor G 2 (692 aa).

The tr-type G domain occupies 8 to 283 (EKTRNIGIMA…AVIDYMPSPV (276 aa)). Residues 17 to 24 (AHIDAGKT), 81 to 85 (DTPGH), and 135 to 138 (NKMD) each bind GTP.

This sequence belongs to the TRAFAC class translation factor GTPase superfamily. Classic translation factor GTPase family. EF-G/EF-2 subfamily.

It is found in the cytoplasm. Catalyzes the GTP-dependent ribosomal translocation step during translation elongation. During this step, the ribosome changes from the pre-translocational (PRE) to the post-translocational (POST) state as the newly formed A-site-bound peptidyl-tRNA and P-site-bound deacylated tRNA move to the P and E sites, respectively. Catalyzes the coordinated movement of the two tRNA molecules, the mRNA and conformational changes in the ribosome. The polypeptide is Elongation factor G 2 (Syntrophotalea carbinolica (strain DSM 2380 / NBRC 103641 / GraBd1) (Pelobacter carbinolicus)).